A 562-amino-acid polypeptide reads, in one-letter code: F-box and WD repeat domain-containing 11-A (562 aa).

Positions 87-136 are homodimerization domain D; it reads GSFDKEKDLCIQLFDQWSESDQVEFVEHLIARMCHYQHGHINSYLKPMLQ. The region spanning 149-187 is the F-box domain; it reads DHIAENILSFLDARSLCSAELVCREWQRVISDGMLWKKL. WD repeat units follow at residues 256–295, 296–335, 336–375, 379–418, 419–458, 459–491, and 508–538; these read RSEN…CLKV, LTGH…VLNT, LIHH…DISL, LVGH…FVRT, LNGH…CLRV, LEGH…WDLQ, and LVEH…LIWD.

In terms of assembly, self-associates. Component of the SCF(FBXW11) complex.

It is found in the cytoplasm. It localises to the nucleus. It functions in the pathway protein modification; protein ubiquitination. Functionally, substrate recognition component of a SCF (SKP1-CUL1-F-box protein) E3 ubiquitin-protein ligase complex which mediates the ubiquitination and subsequent proteasomal degradation of target proteins. Probably recognizes and binds to phosphorylated target proteins: the interaction with substrates requires the phosphorylation of the two serine residues in the substrates' destruction motif D-S-G-X(2,3,4)-S. SCF(FBXW11) mediates the ubiquitination of phosphorylated CTNNB1 and participates in Wnt signaling regulation. Participates in Wnt signaling regulation, and plays a role in eye and jaw development. SCF(FBXW11) plays a key role in NF-kappa-B activation by mediating ubiquitination of phosphorylated NFKBIA, leading to its degradation by the proteasome, thereby allowing the associated NF-kappa-B complex to translocate into the nucleus and to activate transcription. The protein is F-box and WD repeat domain-containing 11-A of Danio rerio (Zebrafish).